We begin with the raw amino-acid sequence, 499 residues long: Inosine-5'-monophosphate dehydrogenase (499 aa).

2 CBS domains span residues Ile106–Val165 and Met169–Ala225. NAD(+) is bound by residues Asp260 and Gly308–Gly310. Gly310 and Gly312 together coordinate K(+). An IMP-binding site is contributed by Ser313. K(+) is bound at residue Cys315. Cys315 acts as the Thioimidate intermediate in catalysis. IMP-binding positions include Asp348–Gly350, Gly371–Ser372, and Tyr395–Gly399. Arg411 serves as the catalytic Proton acceptor. Residue Glu425 participates in IMP binding. K(+) is bound by residues Glu479, Gly480, and His481. The tract at residues Gly480–Glu499 is disordered.

It belongs to the IMPDH/GMPR family. As to quaternary structure, homotetramer. K(+) serves as cofactor.

The enzyme catalyses IMP + NAD(+) + H2O = XMP + NADH + H(+). It participates in purine metabolism; XMP biosynthesis via de novo pathway; XMP from IMP: step 1/1. With respect to regulation, mycophenolic acid (MPA) is a non-competitive inhibitor that prevents formation of the closed enzyme conformation by binding to the same site as the amobile flap. In contrast, mizoribine monophosphate (MZP) is a competitive inhibitor that induces the closed conformation. MPA is a potent inhibitor of mammalian IMPDHs but a poor inhibitor of the bacterial enzymes. MZP is a more potent inhibitor of bacterial IMPDH. Catalyzes the conversion of inosine 5'-phosphate (IMP) to xanthosine 5'-phosphate (XMP), the first committed and rate-limiting step in the de novo synthesis of guanine nucleotides, and therefore plays an important role in the regulation of cell growth. The polypeptide is Inosine-5'-monophosphate dehydrogenase (Halobacterium salinarum (strain ATCC 700922 / JCM 11081 / NRC-1) (Halobacterium halobium)).